Here is a 429-residue protein sequence, read N- to C-terminus: GDP-fucose protein O-fucosyltransferase 2 (429 aa).

Positions 1–21 are cleaved as a signal peptide; the sequence is MATLSFVFLLLGAVSWPPASA. 53–57 lines the GDP-beta-L-fucose pocket; sequence PEGFN. Glu54 functions as the Proton acceptor in the catalytic mechanism. Cys161 and Cys192 form a disulfide bridge. N-linked (GlcNAc...) asparagine glycans are attached at residues Asn189, Asn209, and Asn259. GDP-beta-L-fucose-binding positions include 292–294, Asp371, and 388–389; these read HLR and TF. Cys412 and Cys419 form a disulfide bridge.

The protein belongs to the glycosyltransferase 68 family. Isoform A is expressed in fetal liver and peripheral blood lymphocytes. Isoform B is expressed in spleen, lung, testis, bone marrow, thymus, pancreas, prostate, fetal brain, fetal liver and fetal kidney. Isoform C is expressed in brain, heart, spleen, liver, lung, stomach, testis, placenta, skin, thymus, pancreas, mammary gland, prostate, fetal brain, fetal liver and fetal heart.

Its subcellular location is the endoplasmic reticulum. It is found in the golgi apparatus. The catalysed reaction is L-seryl-[protein] + GDP-beta-L-fucose = 3-O-(alpha-L-fucosyl)-L-seryl-[protein] + GDP + H(+). It catalyses the reaction L-threonyl-[protein] + GDP-beta-L-fucose = 3-O-(alpha-L-fucosyl)-L-threonyl-[protein] + GDP + H(+). It participates in protein modification; protein glycosylation. With respect to regulation, inhibited by EDTA and by Zn(2+). Its function is as follows. Catalyzes the reaction that attaches fucose through an O-glycosidic linkage to a conserved serine or threonine residue in the consensus sequence C1-X-X-S/T-C2 of thrombospondin type I repeats (TSRs) where C1 and C2 are the first and second cysteines of the repeat, respectively. O-fucosylates members of several protein families including the ADAMTS, the thrombospondin (TSP) and spondin families. Required for the proper secretion of ADAMTS family members such as ADAMTSL1 and ADAMTS13. The O-fucosylation of TSRs is also required for restricting epithelial to mesenchymal transition (EMT), maintaining the correct patterning of mesoderm and localization of the definite endoderm. The sequence is that of GDP-fucose protein O-fucosyltransferase 2 (POFUT2) from Homo sapiens (Human).